Consider the following 134-residue polypeptide: Transcription antitermination protein NusB (134 aa).

Belongs to the NusB family.

Functionally, involved in transcription antitermination. Required for transcription of ribosomal RNA (rRNA) genes. Binds specifically to the boxA antiterminator sequence of the ribosomal RNA (rrn) operons. In Shewanella baltica (strain OS223), this protein is Transcription antitermination protein NusB.